The chain runs to 71 residues: MQVLVRDNNVDQALRALKKKMQREGIFREMKMRDYYEKPSQKRAREKAEAVRRVRKLARKRAQREGLVAAR.

It belongs to the bacterial ribosomal protein bS21 family.

In Rhizobium johnstonii (strain DSM 114642 / LMG 32736 / 3841) (Rhizobium leguminosarum bv. viciae), this protein is Small ribosomal subunit protein bS21B.